The following is a 562-amino-acid chain: NAD-dependent malic enzyme (562 aa).

Tyrosine 101 functions as the Proton donor in the catalytic mechanism. Arginine 154 is an NAD(+) binding site. Lysine 172 acts as the Proton acceptor in catalysis. Residues glutamate 243, aspartate 244, and aspartate 267 each coordinate a divalent metal cation. Residues aspartate 267 and asparagine 415 each contribute to the NAD(+) site.

Belongs to the malic enzymes family. Homotetramer. It depends on Mg(2+) as a cofactor. Mn(2+) is required as a cofactor.

It catalyses the reaction (S)-malate + NAD(+) = pyruvate + CO2 + NADH. It carries out the reaction oxaloacetate + H(+) = pyruvate + CO2. The sequence is that of NAD-dependent malic enzyme from Vibrio parahaemolyticus serotype O3:K6 (strain RIMD 2210633).